Here is a 712-residue protein sequence, read N- to C-terminus: Polyribonucleotide nucleotidyltransferase (712 aa).

The Mg(2+) site is built by D485 and D491. In terms of domain architecture, KH spans P552–I611. The S1 motif domain occupies G621 to R689.

The protein belongs to the polyribonucleotide nucleotidyltransferase family. Requires Mg(2+) as cofactor.

Its subcellular location is the cytoplasm. It carries out the reaction RNA(n+1) + phosphate = RNA(n) + a ribonucleoside 5'-diphosphate. Involved in mRNA degradation. Catalyzes the phosphorolysis of single-stranded polyribonucleotides processively in the 3'- to 5'-direction. The chain is Polyribonucleotide nucleotidyltransferase from Gluconacetobacter diazotrophicus (strain ATCC 49037 / DSM 5601 / CCUG 37298 / CIP 103539 / LMG 7603 / PAl5).